Reading from the N-terminus, the 140-residue chain is Large ribosomal subunit protein uL11 (140 aa).

It belongs to the universal ribosomal protein uL11 family. As to quaternary structure, part of the ribosomal stalk of the 50S ribosomal subunit. Interacts with L10 and the large rRNA to form the base of the stalk. L10 forms an elongated spine to which L12 dimers bind in a sequential fashion forming a multimeric L10(L12)X complex. Post-translationally, one or more lysine residues are methylated.

Functionally, forms part of the ribosomal stalk which helps the ribosome interact with GTP-bound translation factors. The polypeptide is Large ribosomal subunit protein uL11 (Lawsonia intracellularis (strain PHE/MN1-00)).